The sequence spans 314 residues: DNA-directed RNA polymerase subunit alpha (314 aa).

The interval 1-228 is alpha N-terminal domain (alpha-NTD); it reads MIEIEKPKIE…EHLNIFVGLT (228 aa). The alpha C-terminal domain (alpha-CTD) stretch occupies residues 245–314; it reads KEKVLEMTIE…ELGLGLRKDD (70 aa).

The protein belongs to the RNA polymerase alpha chain family. As to quaternary structure, homodimer. RNAP is composed of a core of 2 alpha, a beta and a beta' subunit. The core is associated with a delta subunit, and at least one of epsilon or omega. When a sigma factor is associated with the core the holoenzyme is formed, which can initiate transcription.

The enzyme catalyses RNA(n) + a ribonucleoside 5'-triphosphate = RNA(n+1) + diphosphate. DNA-dependent RNA polymerase catalyzes the transcription of DNA into RNA using the four ribonucleoside triphosphates as substrates. The chain is DNA-directed RNA polymerase subunit alpha from Bacillus subtilis (strain 168).